Reading from the N-terminus, the 488-residue chain is MVRRLWRRIAGWLAACVAILCAFPLHAATAGPGAWSSQQTWAADSVNGGNLTGYFYWPASQPTTPNGKRALVLVLHGCVQTASGDVIDNANGAGFNWKSVADQYGAVILAPNATGNVYSNHCWDYANASPSRTAGHVGVLLDLVNRFVTNSQYAIDPNQVYVAGLSSGGGMTMVLGCIAPDIFAGIGINAGPPPGTTTAQIGYVPSGFTATTAANKCNAWAGSNAGKFSTQIAGAVWGTSDYTVAQAYGPMDAAAMRLVYGGNFTQGSQVSISGGGTNTPYTDSNGKVRTHEISVSGMAHAWPAGTGGDNTNYVDATHINYPVFVMDYWVKNNLRAGSGTGQAGSAPTGLAVTATTSTSVSLSWNAVANASSYGVYRNGSKVGSATATAYTDSGLIAGTTYSYTVTAVDPTAGESQPSAAVSATTKSAFTCTATTASNYAHVQAGRAHDSGGIAYANGSNQSMGLDNLFYTSTLAQTAAGYYIVGNCP.

The first 27 residues, 1–27, serve as a signal peptide directing secretion; sequence MVRRLWRRIAGWLAACVAILCAFPLHA. Ser166 acts as the Charge relay system in catalysis. The 83-residue stretch at 346-428 folds into the Fibronectin type-III domain; the sequence is APTGLAVTAT…AAVSATTKSA (83 aa).

It belongs to the AB hydrolase superfamily. Lipase family.

Its subcellular location is the secreted. The catalysed reaction is [(3R)-hydroxybutanoate](n) + H2O = [(3R)-hydroxybutanoate](n-2) + (3R)-hydroxybutanoate dimer + H(+). It catalyses the reaction [(3R)-hydroxybutanoate](n) + H2O = [(3R)-hydroxybutanoate](n-3) + (3R)-hydroxybutanoate trimer + H(+). The enzyme catalyses [(3R)-hydroxybutanoate](n) + H2O = [(3R)-hydroxybutanoate](n-1) + (R)-3-hydroxybutanoate + H(+). It carries out the reaction [(3R)-hydroxybutanoate](n) + H2O = [(3R)-hydroxybutanoate](n-5) + (3R)-hydroxybutanoate pentamer + H(+). The catalysed reaction is [(3R)-hydroxybutanoate](n) + H2O = [(3R)-hydroxybutanoate](n-4) + (3R)-hydroxybutanoate tetramer + H(+). Its function is as follows. This protein degrades water-insoluble and water-soluble PHB to monomeric D(-)-3-hydroxybutyrate. In Ralstonia pickettii (Burkholderia pickettii), this protein is Poly(3-hydroxybutyrate) depolymerase.